Reading from the N-terminus, the 229-residue chain is Aquaporin Z (229 aa).

2 helical membrane passes run Phe-8–Val-28 and Ile-33–Ile-53. An NPA 1 motif is present at residues Asn-62 to Ala-64. Transmembrane regions (helical) follow at residues Leu-81–Ile-101, Ala-131–Thr-151, and Gly-158–Val-178. Positions Asn-184–Ala-186 match the NPA 2 motif. A helical transmembrane segment spans residues Ala-199 to Leu-219.

It belongs to the MIP/aquaporin (TC 1.A.8) family. In terms of assembly, homotetramer.

Its subcellular location is the cell inner membrane. It catalyses the reaction H2O(in) = H2O(out). In terms of biological role, channel that permits osmotically driven movement of water in both directions. It is involved in the osmoregulation and in the maintenance of cell turgor during volume expansion in rapidly growing cells. It mediates rapid entry or exit of water in response to abrupt changes in osmolarity. In Pseudomonas aeruginosa (strain ATCC 15692 / DSM 22644 / CIP 104116 / JCM 14847 / LMG 12228 / 1C / PRS 101 / PAO1), this protein is Aquaporin Z.